The primary structure comprises 390 residues: MNFKRLITTSFTNQIKNMKFKKTISFKPFDINNRIIYDKEPTIVFKDQKSCLLKDTISTTLEDGSKELKIKIGRFTPGLDSNNNYISSDIFEININNYSNKIDLCLNGKNPTFLRRKGKIPTKVKNWEQLLGEQLEIRKSVTLEDGDIISFLGLNGTTSSIQFTIEEDNENEKEKEKEMELDNDNTNTESIPPITSKSTSTSTSLIDTNKIQLKKHFEDPNSKNVGLSALVYFCNKPESFLDVVLYYDDKTVAVLDKYPKAKHHYLVIPRVEINTLDELTPSFIPMLEHMYNVADAIINEIISKDNDDDNLKKSDFKLGFHAIPSMKRLHLHIISNDYNTKYLKNNKHWNSFTTEFYIPFDKILNELKSNGKVKVSIKKKIKKNKKKLIH.

The interval D168–T201 is disordered. Residues D184 to T201 are compositionally biased toward low complexity. The 112-residue stretch at Y232 to L343 folds into the HIT domain.

The protein is HIT domain-containing protein DDB_G0272839 of Dictyostelium discoideum (Social amoeba).